Here is a 414-residue protein sequence, read N- to C-terminus: Multifunctional CCA protein (414 aa).

Positions 8 and 11 each coordinate ATP. Residues Gly8 and Arg11 each contribute to the CTP site. Mg(2+)-binding residues include Asp21 and Asp23. ATP contacts are provided by Arg91, Arg137, and Arg140. Residues Arg91, Arg137, and Arg140 each coordinate CTP. In terms of domain architecture, HD spans 228–329 (TGIHTLLTLA…LKLLDTIDVW (102 aa)).

It belongs to the tRNA nucleotidyltransferase/poly(A) polymerase family. Bacterial CCA-adding enzyme type 1 subfamily. Monomer. Can also form homodimers and oligomers. Mg(2+) is required as a cofactor. Requires Ni(2+) as cofactor.

The catalysed reaction is a tRNA precursor + 2 CTP + ATP = a tRNA with a 3' CCA end + 3 diphosphate. It catalyses the reaction a tRNA with a 3' CCA end + 2 CTP + ATP = a tRNA with a 3' CCACCA end + 3 diphosphate. In terms of biological role, catalyzes the addition and repair of the essential 3'-terminal CCA sequence in tRNAs without using a nucleic acid template. Adds these three nucleotides in the order of C, C, and A to the tRNA nucleotide-73, using CTP and ATP as substrates and producing inorganic pyrophosphate. tRNA 3'-terminal CCA addition is required both for tRNA processing and repair. Also involved in tRNA surveillance by mediating tandem CCA addition to generate a CCACCA at the 3' terminus of unstable tRNAs. While stable tRNAs receive only 3'-terminal CCA, unstable tRNAs are marked with CCACCA and rapidly degraded. This Edwardsiella ictaluri (strain 93-146) protein is Multifunctional CCA protein.